The following is a 469-amino-acid chain: Neuraminidase (469 aa).

Residues 1 to 9 (MNPNQKIIT) are Intravirion-facing. The chain crosses the membrane as a helical span at residues 10–30 (IGSVSLTIATICFLMQIAILV). Positions 11–33 (GSVSLTIATICFLMQIAILVTTV) are involved in apical transport and lipid raft association. Over 31–469 (TTVTLHFKQY…DGADINLMPI (439 aa)) the chain is Virion surface. The tract at residues 36-88 (HFKQYECSSPPNNQVMPCEPIIIERNITEIVYLTNTTIDKEICPKLVEYRNWS) is hypervariable stalk region. Asparagine 61, asparagine 70, and asparagine 86 each carry an N-linked (GlcNAc...) asparagine; by host glycan. The head of neuraminidase stretch occupies residues 91 to 469 (QCKITGFAPF…DGADINLMPI (379 aa)). Cystine bridges form between cysteine 92–cysteine 417, cysteine 124–cysteine 129, cysteine 183–cysteine 230, cysteine 232–cysteine 237, cysteine 278–cysteine 291, cysteine 280–cysteine 289, cysteine 318–cysteine 337, and cysteine 421–cysteine 447. Arginine 118 is a binding site for substrate. An N-linked (GlcNAc...) asparagine; by host glycan is attached at asparagine 146. Aspartate 151 acts as the Proton donor/acceptor in catalysis. Arginine 152 serves as a coordination point for substrate. Residues asparagine 200 and asparagine 234 are each glycosylated (N-linked (GlcNAc...) asparagine; by host). 276 to 277 (EE) serves as a coordination point for substrate. Arginine 292 provides a ligand contact to substrate. Ca(2+)-binding residues include aspartate 293, glycine 297, and aspartate 324. A substrate-binding site is contributed by arginine 371. An N-linked (GlcNAc...) asparagine; by host glycan is attached at asparagine 402. Tyrosine 406 acts as the Nucleophile in catalysis.

This sequence belongs to the glycosyl hydrolase 34 family. In terms of assembly, homotetramer. Requires Ca(2+) as cofactor. In terms of processing, N-glycosylated.

It localises to the virion membrane. The protein resides in the host apical cell membrane. The catalysed reaction is Hydrolysis of alpha-(2-&gt;3)-, alpha-(2-&gt;6)-, alpha-(2-&gt;8)- glycosidic linkages of terminal sialic acid residues in oligosaccharides, glycoproteins, glycolipids, colominic acid and synthetic substrates.. With respect to regulation, inhibited by the neuraminidase inhibitors zanamivir (Relenza) and oseltamivir (Tamiflu). These drugs interfere with the release of progeny virus from infected cells and are effective against all influenza strains. Resistance to neuraminidase inhibitors is quite rare. Its function is as follows. Catalyzes the removal of terminal sialic acid residues from viral and cellular glycoconjugates. Cleaves off the terminal sialic acids on the glycosylated HA during virus budding to facilitate virus release. Additionally helps virus spread through the circulation by further removing sialic acids from the cell surface. These cleavages prevent self-aggregation and ensure the efficient spread of the progeny virus from cell to cell. Otherwise, infection would be limited to one round of replication. Described as a receptor-destroying enzyme because it cleaves a terminal sialic acid from the cellular receptors. May facilitate viral invasion of the upper airways by cleaving the sialic acid moieties on the mucin of the airway epithelial cells. Likely to plays a role in the budding process through its association with lipid rafts during intracellular transport. May additionally display a raft-association independent effect on budding. Plays a role in the determination of host range restriction on replication and virulence. Sialidase activity in late endosome/lysosome traffic seems to enhance virus replication. This is Neuraminidase from Aves (whales).